We begin with the raw amino-acid sequence, 420 residues long: UDP-glucuronic acid decarboxylase 1 (420 aa).

Met1 is modified (N-acetylmethionine). At 1–19 (MVSKALLRLVSAVNRRRMK) the chain is on the cytoplasmic side. A helical; Signal-anchor for type II membrane protein membrane pass occupies residues 20 to 40 (LLLGIALLAYVASVWGNFVNM). Residues 41–420 (RSIQENGELK…RIKKGRTRHS (380 aa)) lie on the Lumenal side of the membrane. The residue at position 94 (Thr94) is a Phosphothreonine. Gly98, Phe99, Val100, Asp119, Asn120, Phe122, Thr123, Gly124, Asp144, and Val145 together coordinate NAD(+). 2 residues coordinate UDP-alpha-D-glucuronate: Leu149 and Tyr150. Leu159 and Ser161 together coordinate NAD(+). UDP-alpha-D-glucuronate is bound at residue Lys177. Thr178 contributes to the NAD(+) binding site. UDP-alpha-D-glucuronate-binding residues include Asn185, Gly188, Lys191, and Arg192. Positions 200, 231, and 235 each coordinate NAD(+). The active-site Proton acceptor is the Tyr231. UDP-alpha-D-glucuronate contacts are provided by Tyr245, Gln248, and Glu249. 3 residues coordinate NAD(+): Thr261, His267, and Arg272. The N-linked (GlcNAc...) asparagine glycan is linked to Asn316.

The protein belongs to the NAD(P)-dependent epimerase/dehydratase family. UDP-glucuronic acid decarboxylase subfamily. As to quaternary structure, homodimer and homotetramer. Interacts with AKT1. NAD(+) is required as a cofactor.

The protein localises to the golgi apparatus. Its subcellular location is the golgi stack membrane. The enzyme catalyses UDP-alpha-D-glucuronate + H(+) = UDP-alpha-D-xylose + CO2. The protein operates within nucleotide-sugar biosynthesis; UDP-alpha-D-xylose biosynthesis; UDP-alpha-D-xylose from UDP-alpha-D-glucuronate: step 1/1. Its function is as follows. Catalyzes the NAD-dependent decarboxylation of UDP-glucuronic acid to UDP-xylose. Necessary for the biosynthesis of the core tetrasaccharide in glycosaminoglycan biosynthesis. The chain is UDP-glucuronic acid decarboxylase 1 from Homo sapiens (Human).